The sequence spans 269 residues: Hydroxyethylthiazole kinase (269 aa).

Residue Met48 participates in substrate binding. Residues Lys124 and Thr170 each contribute to the ATP site. Position 197 (Gly197) interacts with substrate.

Belongs to the Thz kinase family. Mg(2+) is required as a cofactor.

It carries out the reaction 5-(2-hydroxyethyl)-4-methylthiazole + ATP = 4-methyl-5-(2-phosphooxyethyl)-thiazole + ADP + H(+). It participates in cofactor biosynthesis; thiamine diphosphate biosynthesis; 4-methyl-5-(2-phosphoethyl)-thiazole from 5-(2-hydroxyethyl)-4-methylthiazole: step 1/1. Its function is as follows. Catalyzes the phosphorylation of the hydroxyl group of 4-methyl-5-beta-hydroxyethylthiazole (THZ). The polypeptide is Hydroxyethylthiazole kinase (Clostridium kluyveri (strain NBRC 12016)).